Reading from the N-terminus, the 220-residue chain is Histone deacetylase complex subunit SAP30 (220 aa).

The interval 1–129 is interaction with NCOR1; it reads MNGFTPDEMS…QSVRNRRKRK (129 aa). Threonine 5 carries the phosphothreonine modification. Residues 67–115 form an Atypical zinc finger; the sequence is CCLREDGERCGRAAGNASFSKRIQKSISQKKVKIELDKSARHLYICDYH. Lysine 87 is covalently cross-linked (Glycyl lysine isopeptide (Lys-Gly) (interchain with G-Cter in SUMO2)). The segment at 123–143 is disordered; the sequence is RNRRKRKGSDDDGGDSPVQDI. An interaction with SIN3A region spans residues 130–220; sequence GSDDDGGDSP…SDLKVDSGVH (91 aa). Phosphoserine occurs at positions 131 and 138. The residue at position 145 (threonine 145) is a Phosphothreonine. Residues lysine 194, lysine 205, and lysine 214 each participate in a glycyl lysine isopeptide (Lys-Gly) (interchain with G-Cter in SUMO2) cross-link.

It belongs to the SAP30 family. As to quaternary structure, component of the histone deacetylase complex that includes at least SIN3A, HDAC1 and HDAC2. Found in a complex composed of at least SINHCAF, SIN3A, HDAC1, SAP30, RBBP4, OGT and TET1. Interacts with HDAC1. Interacts with SIN3A, SIN3B, HDAC2, RBBP4 and NCOR1. Interacts with SAMSN1. Interacts with HCFC1. Interacts with SAP30BP. Expressed in all tissues tested with highest levels in pancreas, ovary, PBL, spleen and thymus; lowest levels in brain, placenta, lung and kidney.

The protein resides in the nucleus. In terms of biological role, involved in the functional recruitment of the Sin3-histone deacetylase complex (HDAC) to a specific subset of N-CoR corepressor complexes. Capable of transcription repression by N-CoR. Active in deacetylating core histone octamers (when in a complex) but inactive in deacetylating nucleosomal histones. Functionally, (Microbial infection) Involved in transcriptional repression of HHV-1 genes TK and gC. The polypeptide is Histone deacetylase complex subunit SAP30 (Homo sapiens (Human)).